Here is a 1844-residue protein sequence, read N- to C-terminus: ATPase family AAA domain-containing protein 5 (1844 aa).

At Ser44 the chain carries Phosphoserine. A Glycyl lysine isopeptide (Lys-Gly) (interchain with G-Cter in SUMO2) cross-link involves residue Lys127. Positions 178–199 (QPNTMTSLQNSKKVNPKQGTTK) are enriched in polar residues. The segment at 178 to 204 (QPNTMTSLQNSKKVNPKQGTTKNDFKK) is disordered. Phosphoserine occurs at positions 219, 306, 311, 354, and 369. The segment at 368 to 384 (KSNVVIQEEELELAVLE) is interaction with WDR48. 3 disordered regions span residues 477–499 (KLKKKNKKTLDTGAIPGKNREGN), 580–623 (ESEA…NSQL), and 658–700 (KFTR…SKNI). Composition is skewed to polar residues over residues 580-592 (ESEASLLNVSTPK) and 599-608 (RISSTPTTET). Residues Ser602, Ser614, and Ser621 each carry the phosphoserine modification. Basic residues predominate over residues 664–673 (TPKKSKKKSN). The span at 685 to 700 (GFTSQIRKASNTSKNI) shows a compositional bias: polar residues. Ser817 carries the post-translational modification Phosphoserine. Basic and acidic residues-rich tracts occupy residues 987 to 1032 (LEAD…ELSK) and 1092 to 1106 (RQNLKGKRDEKHEDF). Disordered regions lie at residues 987-1047 (LEAD…SKDS) and 1092-1118 (RQNLKGKRDEKHEDFSGGIDFKGSSDD). A Phosphoserine modification is found at Ser1116. ATP is bound at residue 1132–1139 (GPTGVGKT). 2 disordered regions span residues 1203–1235 (KKISSPKKVVTSPRKVPPPSPKSSGPKRALPPK) and 1272–1292 (ITQTKSTNATNSNVKDVGAEE). Residues 1272-1285 (ITQTKSTNATNSNV) show a composition bias toward polar residues. The short motif at 1428–1432 (LVCSE) is the LXCXE motif element. The segment at 1591–1635 (SLSSVSSSSNAEESKTGDEESKARDKGNNPETKKSIPCPPKTTAG) is disordered. Over residues 1602-1624 (EESKTGDEESKARDKGNNPETKK) the composition is skewed to basic and acidic residues. Residues 1630–1719 (PKTTAGKKCS…AAAEALSFTK (90 aa)) are interaction with RAD51 and RFC5.

The protein belongs to the AAA ATPase family. In terms of assembly, component of a heteropentameric replication factor ATAD5 RFC-like complex composed of one large subunit (ATAD5) and four small subunits (RFC2, RFC3, RFC4 and RFC5). Within the ATAD5 RFC-like complex, interacts with RFC2, RFC4 and RFC5. Within the ATAD5 RFC-like complex, interacts directly via-N terminal with RAD51; the interactions is enhanced under replication stress. Interacts with RB1 predominantly in G1 phase via its LXCXE motif. Interacts with RAD9A in growing cells. The interaction with RAD9A is reduced after exposure to DNA replication-inhibiting agents. Interacts with BRD4. Interacts with PCNA. Interacts with deubiquitinating enzyme USP1, and its associated factor, WDR48. ATR may stimulate the RAD9A dissociation.

It localises to the nucleus. In terms of biological role, has an important role in DNA replication and in maintaining genome integrity during replication stress. Involved in a RAD9A-related damage checkpoint, a pathway that is important in determining whether DNA damage is compatible with cell survival or whether it requires cell elimination by apoptosis. Modulates the RAD9A interaction with BCL2 and thereby induces DNA damage-induced apoptosis. Promotes PCNA deubiquitination by recruiting the ubiquitin-specific protease 1 (USP1) and WDR48 thereby down-regulating the error-prone damage bypass pathway. As component of the ATAD5 RFC-like complex, regulates the function of the DNA polymerase processivity factor PCNA by unloading the ring-shaped PCNA homotrimer from DNA after replication during the S phase of the cell cycle. This seems to be dependent on its ATPase activity. Plays important roles in restarting stalled replication forks under replication stress, by unloading the PCNA homotrimer from DNA and recruiting RAD51 possibly through an ATR-dependent manner. Ultimately this enables replication fork regression, breakage, and eventual fork restart. Both the PCNA unloading activity and the interaction with WDR48 are required to efficiently recruit RAD51 to stalled replication forks. Promotes the generation of MUS81-mediated single-stranded DNA-associated breaks in response to replication stress, which is an alternative pathway to restart stalled/regressed replication forks. This is ATPase family AAA domain-containing protein 5 from Homo sapiens (Human).